The following is a 308-amino-acid chain: Glutaminase (308 aa).

Positions 66, 117, 161, 168, 192, 244, and 262 each coordinate substrate.

It belongs to the glutaminase family. In terms of assembly, homotetramer.

The catalysed reaction is L-glutamine + H2O = L-glutamate + NH4(+). This is Glutaminase from Klebsiella pneumoniae (strain 342).